The sequence spans 270 residues: Tryptophan synthase alpha chain (270 aa).

Catalysis depends on proton acceptor residues E57 and D68.

Belongs to the TrpA family. As to quaternary structure, tetramer of two alpha and two beta chains.

It carries out the reaction (1S,2R)-1-C-(indol-3-yl)glycerol 3-phosphate + L-serine = D-glyceraldehyde 3-phosphate + L-tryptophan + H2O. Its pathway is amino-acid biosynthesis; L-tryptophan biosynthesis; L-tryptophan from chorismate: step 5/5. Its function is as follows. The alpha subunit is responsible for the aldol cleavage of indoleglycerol phosphate to indole and glyceraldehyde 3-phosphate. This chain is Tryptophan synthase alpha chain, found in Mycobacterium leprae (strain Br4923).